Here is a 333-residue protein sequence, read N- to C-terminus: Cytochrome f (333 aa).

The first 44 residues, 1–44 (MRNACTRARLTRTARAMVKTLFIAIASVTFFFTSDLALPQSAAA), serve as a signal peptide directing secretion. Heme-binding residues include tyrosine 45, cysteine 66, cysteine 69, and histidine 70. Residues 299-318 (VGWLIAFVALVMLAQVMLVL) traverse the membrane as a helical segment.

Belongs to the cytochrome f family. In terms of assembly, the 4 large subunits of the cytochrome b6-f complex are cytochrome b6, subunit IV (17 kDa polypeptide, PetD), cytochrome f and the Rieske protein, while the 4 small subunits are PetG, PetL, PetM and PetN. The complex functions as a dimer. Heme is required as a cofactor.

The protein localises to the cellular thylakoid membrane. Component of the cytochrome b6-f complex, which mediates electron transfer between photosystem II (PSII) and photosystem I (PSI), cyclic electron flow around PSI, and state transitions. The sequence is that of Cytochrome f from Nostoc sp. (strain PCC 7120 / SAG 25.82 / UTEX 2576).